We begin with the raw amino-acid sequence, 239 residues long: N-glycosylase/DNA lyase (239 aa).

8-oxoguanine is bound by residues Gln24, Ser51, and Trp62. The segment at 118–182 is helix-hairpin-helix; sequence ERYYEDMTLL…EDVRIIKLTR (65 aa). Lys142 (schiff-base intermediate with DNA) is an active-site residue. The 8-oxoguanine site is built by Phe146 and Pro172. Asp174 is an active-site residue. 2 residues coordinate 8-oxoguanine: Asp208 and Trp212.

Belongs to the archaeal N-glycosylase/DNA lyase (AGOG) family.

The enzyme catalyses 2'-deoxyribonucleotide-(2'-deoxyribose 5'-phosphate)-2'-deoxyribonucleotide-DNA = a 3'-end 2'-deoxyribonucleotide-(2,3-dehydro-2,3-deoxyribose 5'-phosphate)-DNA + a 5'-end 5'-phospho-2'-deoxyribonucleoside-DNA + H(+). Its function is as follows. DNA repair enzyme that is part of the base excision repair (BER) pathway; protects from oxidative damage by removing the major product of DNA oxidation, 8-oxoguanine (GO), from single- and double-stranded DNA substrates. The polypeptide is N-glycosylase/DNA lyase (Pyrococcus horikoshii (strain ATCC 700860 / DSM 12428 / JCM 9974 / NBRC 100139 / OT-3)).